The sequence spans 151 residues: Cathelicidin-3 (151 aa).

The N-terminal stretch at 1–17 (MLSCWVLLLALLGGACA) is a signal peptide. The propeptide occupies 18–122 (LPAPLGYSQA…TCVDSMADPV (105 aa)). 2 cysteine pairs are disulfide-bonded: Cys-75-Cys-86 and Cys-97-Cys-114. The helical transmembrane segment at 128 to 148 (WPLVPVAINTVAAGINLYKAI) threads the bilayer.

The protein belongs to the cathelicidin family. Detected in bone marrow, liver and lung.

The protein localises to the secreted. Its subcellular location is the membrane. Functionally, may bind bacterial lipopolysaccharide (LPS). May have antimicrobial activity and play a role in the innate immune response. This chain is Cathelicidin-3 (CATHL3), found in Gallus gallus (Chicken).